Consider the following 453-residue polypeptide: Retroviral integration site protein Fli-1 homolog (453 aa).

Positions 111–197 (PPPPNMTTNE…SHLNYLRDSS (87 aa)) constitute a PNT domain. Residues 201–214 (GYNTQAHTDQSSRL) are compositionally biased toward polar residues. Positions 201 to 273 (GYNTQAHTDQ…YQILGPTSSR (73 aa)) are disordered. Over residues 215 to 226 (TAKEDPSYEAVR) the composition is skewed to basic and acidic residues. Composition is skewed to polar residues over residues 230 to 239 (WGNSMSSPVT) and 246 to 273 (GTQN…TSSR). Residues 282–362 (IQLWQFLLEL…HGKRYAYKFD (81 aa)) constitute a DNA-binding region (ETS).

This sequence belongs to the ETS family.

It localises to the nucleus. This chain is Retroviral integration site protein Fli-1 homolog (fli1), found in Xenopus laevis (African clawed frog).